Reading from the N-terminus, the 114-residue chain is uncharacterized protein (114 aa).

Residue C10 is part of the active site.

This sequence belongs to the ArsC family.

This is an uncharacterized protein from Haemophilus influenzae (strain ATCC 51907 / DSM 11121 / KW20 / Rd).